Here is a 218-residue protein sequence, read N- to C-terminus: Cytidylate kinase (218 aa).

ATP is bound at residue G10–T18.

Belongs to the cytidylate kinase family. Type 1 subfamily.

The protein localises to the cytoplasm. The enzyme catalyses CMP + ATP = CDP + ADP. It catalyses the reaction dCMP + ATP = dCDP + ADP. This is Cytidylate kinase from Staphylococcus haemolyticus (strain JCSC1435).